An 86-amino-acid chain; its full sequence is Large ribosomal subunit protein bL31B (86 aa).

The protein belongs to the bacterial ribosomal protein bL31 family. Type B subfamily. As to quaternary structure, part of the 50S ribosomal subunit.

The sequence is that of Large ribosomal subunit protein bL31B from Cupriavidus pinatubonensis (strain JMP 134 / LMG 1197) (Cupriavidus necator (strain JMP 134)).